Reading from the N-terminus, the 395-residue chain is MNGEENSDSIPIDLILEILSRLPAKSITRFHCVSKLWGSMLCRPYFNELFLTISSARPRLLFAFSKHGEWRFFSSPQPQNPYGKSSFVATADFHTKFSQNLNICNYTSGLVYFSAMWITKADVICNPSTGHYAMLPKLLLTYGETRSFFLFDPVGKQFKVLLMNKINNNETKDIHILTLGTRKVRWRKIQQCPLIHIVSHEWICINGALYYIAYNIDDFLGYIVCFDVRSEKFKCLNLNQDCFSERSTKLIYYKGKLGVVNLKYAHGGGFPLKLCMWVLEDVEKQEWTTSVYTLRDEDRVVKVYYDLFIVGITATGEIVLAKKKVCKPFYVFYFNLERNTLLSVEIQGFGEYQSCCSVHAFVDHVEDLNVYAFVEHMKKTYEYDATSISPSEQKL.

The F-box domain maps to 4–53; it reads EENSDSIPIDLILEILSRLPAKSITRFHCVSKLWGSMLCRPYFNELFLTI.

The chain is Putative F-box protein At5g42430 from Arabidopsis thaliana (Mouse-ear cress).